Consider the following 878-residue polypeptide: MKRRWSNNGGFMRLPEESSSEVTSSSNGLVLPSGVNMSPSSLDSHDYCDQDLWLCGNESGSFGGSNGHGLSQQQQSVITLAMHGCSSTLPAQTTIIPINGNANGNGGSTNGQYVPGATNLGALANGMLNGGFNGMQQQIQNGHGLINSTTPSTPTTPLHLQQNLGGAGGGGIGGMGILHHANGTPNGLIGVVGGGGGVGLGVGGGGVGGLGMQHTPRSDSVNSISSGRDDLSPSSSLNGYSANESCDAKKSKKGPAPRVQEELCLVCGDRASGYHYNALTCEGCKGFFRRSVTKSAVYCCKFGRACEMDMYMRRKCQECRLKKCLAVGMRPECVVPENQCAMKRREKKAQKEKDKMTTSPSSQHGGNGSLASGGGQDFVKKEILDLMTCEPPQHATIPLLPDEILAKCQARNIPSLTYNQLAVIYKLIWYQDGYEQPSEEDLRRIMSQPDENESQTDVSFRHITEITILTVQLIVEFAKGLPAFTKIPQEDQITLLKACSSEVMMLRMARRYDHSSDSIFFANNRSYTRDSYKMAGMADNIEDLLHFCRQMFSMKVDNVEYALLTAIVIFSDRPGLEKAQLVEAIQSYYIDTLRIYILNRHCGDSMSLVFYAKLLSILTELRTLGNQNAEMCFSLKLKNRKLPKFLEEIWDVHAIPPSVQSHLQITQEENERLERAERMRASVGGAITAGIDCDSASTSAAAAAAQHQPQPQPQPQPSSLTQNDSQHQTQPQLQPQLPPQLQGQLQPQLQPQLQTQLQPQIQPQPQLLPVSAPVPASVTAPGSLSAVSTSSEYMGGSAAIGPITPATTSSITAAVTASSTTSAVPMGNGVGVGVGVGGNVSMYANAQTAMALMGVALHSHQEQLIGGVAVKSEHSTTA.

Disordered stretches follow at residues methionine 1–asparagine 27 and glycine 209–glycine 254. Residues methionine 1–leucine 263 are modulating. 2 NR C4-type zinc fingers span residues cysteine 264–cysteine 284 and cysteine 300–cysteine 324. A DNA-binding region (nuclear receptor) is located at residues cysteine 264–proline 336. The tract at residues arginine 344–glycine 374 is disordered. Gly residues predominate over residues glycine 365–glycine 374. One can recognise an NR LBD domain in the interval asparagine 419–alanine 654. Low complexity-rich tracts occupy residues threonine 698 to proline 709 and glutamine 728 to proline 759. The segment at threonine 698–proline 759 is disordered.

Belongs to the nuclear hormone receptor family. NR1 subfamily. As to quaternary structure, heterodimer of USP and ECR. Only the heterodimer is capable of high-affinity binding to ecdysone. Interacts with trr in an ecdysone-dependent manner. Upon ecdysone stimulation, interacts with Nup98. In terms of tissue distribution, isoform B1 predominates over isoform A in larval tissues, imaginal histoblast nests and midgut islands. Isoform A predominates over B1 in imaginal disks, and the larval prothoracic gland.

The protein localises to the nucleus. Its function is as follows. Receptor for ecdysone. Binds to ecdysone response elements (ECRES) following ecdysone-binding, and recruitment of a complex containing the histone methyltransferase trr, leads to activate transcription of target genes. The protein is Ecdysone receptor (EcR) of Drosophila melanogaster (Fruit fly).